A 180-amino-acid chain; its full sequence is Large ribosomal subunit protein bL19 (180 aa).

This sequence belongs to the bacterial ribosomal protein bL19 family.

This protein is located at the 30S-50S ribosomal subunit interface and may play a role in the structure and function of the aminoacyl-tRNA binding site. The chain is Large ribosomal subunit protein bL19 from Allorhizobium ampelinum (strain ATCC BAA-846 / DSM 112012 / S4) (Agrobacterium vitis (strain S4)).